The sequence spans 445 residues: Argininosuccinate synthase (445 aa).

Residues 17–25 (AFSGGLDTS) and A43 each bind ATP. Residue Y99 coordinates L-citrulline. ATP-binding residues include G129 and T131. L-aspartate contacts are provided by T131, N135, and D136. N135 provides a ligand contact to L-citrulline. D136 serves as a coordination point for ATP. L-citrulline-binding residues include R139 and S192. D194 contacts ATP. The L-citrulline site is built by T201, E203, and E280.

It belongs to the argininosuccinate synthase family. Type 2 subfamily. In terms of assembly, homotetramer.

It is found in the cytoplasm. The catalysed reaction is L-citrulline + L-aspartate + ATP = 2-(N(omega)-L-arginino)succinate + AMP + diphosphate + H(+). The protein operates within amino-acid biosynthesis; L-arginine biosynthesis; L-arginine from L-ornithine and carbamoyl phosphate: step 2/3. This Rhodopseudomonas palustris (strain BisA53) protein is Argininosuccinate synthase.